The following is a 190-amino-acid chain: Potassium-transporting ATPase KdpC subunit (190 aa).

A helical transmembrane segment spans residues 10–30 (TFIFLLLITGGVYPLLTTALG).

This sequence belongs to the KdpC family. In terms of assembly, the system is composed of three essential subunits: KdpA, KdpB and KdpC.

The protein localises to the cell inner membrane. In terms of biological role, part of the high-affinity ATP-driven potassium transport (or Kdp) system, which catalyzes the hydrolysis of ATP coupled with the electrogenic transport of potassium into the cytoplasm. This subunit acts as a catalytic chaperone that increases the ATP-binding affinity of the ATP-hydrolyzing subunit KdpB by the formation of a transient KdpB/KdpC/ATP ternary complex. This chain is Potassium-transporting ATPase KdpC subunit, found in Escherichia coli O157:H7.